Here is a 393-residue protein sequence, read N- to C-terminus: S-adenosylmethionine synthase (393 aa).

Residue H16 participates in ATP binding. Residue D18 coordinates Mg(2+). Residue E44 coordinates K(+). L-methionine-binding residues include E57 and Q100. The tract at residues 100–110 is flexible loop; the sequence is QSNDIAQGVDH. Residues 167 to 169, 238 to 239, D247, 253 to 254, A270, and K274 contribute to the ATP site; these read DAK, RF, and RK. D247 contacts L-methionine. An L-methionine-binding site is contributed by K278.

Belongs to the AdoMet synthase family. In terms of assembly, homotetramer; dimer of dimers. It depends on Mg(2+) as a cofactor. The cofactor is K(+).

Its subcellular location is the cytoplasm. The catalysed reaction is L-methionine + ATP + H2O = S-adenosyl-L-methionine + phosphate + diphosphate. It participates in amino-acid biosynthesis; S-adenosyl-L-methionine biosynthesis; S-adenosyl-L-methionine from L-methionine: step 1/1. Catalyzes the formation of S-adenosylmethionine (AdoMet) from methionine and ATP. The overall synthetic reaction is composed of two sequential steps, AdoMet formation and the subsequent tripolyphosphate hydrolysis which occurs prior to release of AdoMet from the enzyme. This is S-adenosylmethionine synthase from Leptothrix cholodnii (strain ATCC 51168 / LMG 8142 / SP-6) (Leptothrix discophora (strain SP-6)).